Consider the following 218-residue polypeptide: Putative tRNA methyltransferase MG248 (218 aa).

This sequence belongs to the TrmK family.

The protein localises to the cytoplasm. This Mycoplasma genitalium (strain ATCC 33530 / DSM 19775 / NCTC 10195 / G37) (Mycoplasmoides genitalium) protein is Putative tRNA methyltransferase MG248.